The following is a 208-amino-acid chain: Small ribosomal subunit protein uS4 (208 aa).

The interval 29–48 is disordered; the sequence is MERRPYGPGQHGRARRKQDS. Positions 95-155 constitute an S4 RNA-binding domain; that stretch reads QRLDALVLRA…ERSEKMVPFQ (61 aa).

Belongs to the universal ribosomal protein uS4 family. Part of the 30S ribosomal subunit. Contacts protein S5. The interaction surface between S4 and S5 is involved in control of translational fidelity.

Functionally, one of the primary rRNA binding proteins, it binds directly to 16S rRNA where it nucleates assembly of the body of the 30S subunit. Its function is as follows. With S5 and S12 plays an important role in translational accuracy. This Micrococcus luteus (strain ATCC 4698 / DSM 20030 / JCM 1464 / CCM 169 / CCUG 5858 / IAM 1056 / NBRC 3333 / NCIMB 9278 / NCTC 2665 / VKM Ac-2230) (Micrococcus lysodeikticus) protein is Small ribosomal subunit protein uS4.